The chain runs to 316 residues: tRNA dimethylallyltransferase (316 aa).

17-24 (GPTASGKT) provides a ligand contact to ATP. 19-24 (TASGKT) provides a ligand contact to substrate. 4 interaction with substrate tRNA regions span residues 42-45 (DSAL), 166-170 (QRLSR), 247-252 (RCVGYR), and 280-287 (KRQITWLR).

It belongs to the IPP transferase family. Monomer. It depends on Mg(2+) as a cofactor.

It catalyses the reaction adenosine(37) in tRNA + dimethylallyl diphosphate = N(6)-dimethylallyladenosine(37) in tRNA + diphosphate. In terms of biological role, catalyzes the transfer of a dimethylallyl group onto the adenine at position 37 in tRNAs that read codons beginning with uridine, leading to the formation of N6-(dimethylallyl)adenosine (i(6)A). This chain is tRNA dimethylallyltransferase, found in Escherichia coli O81 (strain ED1a).